The following is a 71-amino-acid chain: Large ribosomal subunit protein bL31 (71 aa).

Residues Cys16, Cys18, Cys37, and Cys40 each coordinate Zn(2+).

Belongs to the bacterial ribosomal protein bL31 family. Type A subfamily. As to quaternary structure, part of the 50S ribosomal subunit. Requires Zn(2+) as cofactor.

Its function is as follows. Binds the 23S rRNA. The chain is Large ribosomal subunit protein bL31 from Actinobacillus succinogenes (strain ATCC 55618 / DSM 22257 / CCUG 43843 / 130Z).